The following is a 115-amino-acid chain: Small ribosomal subunit protein uS13 (115 aa).

The disordered stretch occupies residues 92–115 (RRGLPVRGQNTKNNARTRKGSKRK). Positions 106–115 (ARTRKGSKRK) are enriched in basic residues.

Belongs to the universal ribosomal protein uS13 family. As to quaternary structure, part of the 30S ribosomal subunit. Forms a loose heterodimer with protein S19. Forms two bridges to the 50S subunit in the 70S ribosome.

In terms of biological role, located at the top of the head of the 30S subunit, it contacts several helices of the 16S rRNA. In the 70S ribosome it contacts the 23S rRNA (bridge B1a) and protein L5 of the 50S subunit (bridge B1b), connecting the 2 subunits; these bridges are implicated in subunit movement. Contacts the tRNAs in the A and P-sites. The polypeptide is Small ribosomal subunit protein uS13 (Lactobacillus gasseri (strain ATCC 33323 / DSM 20243 / BCRC 14619 / CIP 102991 / JCM 1131 / KCTC 3163 / NCIMB 11718 / NCTC 13722 / AM63)).